The sequence spans 260 residues: Cytosolic Fe-S cluster assembly factor Nubp2 homolog 1 (260 aa).

ATP is bound at residue 14–21 (GKGGVGKS). [4Fe-4S] cluster contacts are provided by Cys-188 and Cys-191.

This sequence belongs to the Mrp/NBP35 ATP-binding proteins family. NUBP2/CFD1 subfamily. As to quaternary structure, heterotetramer of 2 Nubp1 and 2 Nubp2 chains. The cofactor is [4Fe-4S] cluster.

It localises to the cytoplasm. Its function is as follows. Component of the cytosolic iron-sulfur (Fe/S) protein assembly (CIA) machinery. Required for maturation of extramitochondrial Fe-S proteins. The Nubp1-Nubp2 heterotetramer forms a Fe-S scaffold complex, mediating the de novo assembly of an Fe-S cluster and its transfer to target apoproteins. The chain is Cytosolic Fe-S cluster assembly factor Nubp2 homolog 1 from Drosophila yakuba (Fruit fly).